We begin with the raw amino-acid sequence, 318 residues long: Protein-methionine-sulfoxide reductase catalytic subunit MsrP (318 aa).

Residues 1–40 constitute a signal peptide (tat-type signal); sequence MKQLMMSDVTPEEIFNQRRQIIKSMGLGIATLGLPNIAFA. Mo-molybdopterin contacts are provided by residues Asn-72, 75–76, Cys-130, Thr-165, Asn-217, Arg-222, and 233–235; these read YE and SIK.

The protein belongs to the MsrP family. In terms of assembly, heterodimer of a catalytic subunit (MsrP) and a heme-binding subunit (MsrQ). The cofactor is Mo-molybdopterin. In terms of processing, predicted to be exported by the Tat system. The position of the signal peptide cleavage has not been experimentally proven.

It is found in the periplasm. It catalyses the reaction L-methionyl-[protein] + a quinone + H2O = L-methionyl-(S)-S-oxide-[protein] + a quinol. It carries out the reaction L-methionyl-[protein] + a quinone + H2O = L-methionyl-(R)-S-oxide-[protein] + a quinol. In terms of biological role, part of the MsrPQ system that repairs oxidized periplasmic proteins containing methionine sulfoxide residues (Met-O), using respiratory chain electrons. Thus protects these proteins from oxidative-stress damage caused by reactive species of oxygen and chlorine generated by the host defense mechanisms. MsrPQ is essential for the maintenance of envelope integrity under bleach stress, rescuing a wide series of structurally unrelated periplasmic proteins from methionine oxidation. The catalytic subunit MsrP is non-stereospecific, being able to reduce both (R-) and (S-) diastereoisomers of methionine sulfoxide. The protein is Protein-methionine-sulfoxide reductase catalytic subunit MsrP of Haemophilus ducreyi (strain 35000HP / ATCC 700724).